The primary structure comprises 352 residues: Ion-translocating oxidoreductase complex subunit D (352 aa).

A run of 4 helical transmembrane segments spans residues 20–40 (IMLL…WFFG), 42–62 (GTLF…AIVL), 69–91 (VASH…SIPP), and 123–143 (PAMI…TSWL). Threonine 187 bears the FMN phosphoryl threonine mark. Transmembrane regions (helical) follow at residues 215–235 (LAGV…VFLL), 242–262 (WHIP…GWLF), 267–287 (LASP…FFIL), 301–321 (LIFG…GGYP), and 322–342 (DGVA…DYYT).

Belongs to the NqrB/RnfD family. The complex is composed of six subunits: RsxA, RsxB, RsxC, RsxD, RsxE and RsxG. It depends on FMN as a cofactor.

The protein localises to the cell inner membrane. Functionally, part of a membrane-bound complex that couples electron transfer with translocation of ions across the membrane. Required to maintain the reduced state of SoxR. The chain is Ion-translocating oxidoreductase complex subunit D from Salmonella typhi.